Reading from the N-terminus, the 55-residue chain is Probable Rubredoxin-2 (55 aa).

Residues 4 to 54 (MARYQCMCGWVYDEDKGEPSQNIPPGTKFEDLPDTFRCPQCGLGKNAFRKI) form the Rubredoxin-like domain. 4 residues coordinate Fe cation: C9, C11, C41, and C44.

This sequence belongs to the rubredoxin family. Fe(3+) is required as a cofactor.

Rubredoxin is a small nonheme, iron protein lacking acid-labile sulfide. Its single Fe, chelated to 4 Cys, functions as an electron acceptor and may also stabilize the conformation of the molecule. This is Probable Rubredoxin-2 from Methanocaldococcus jannaschii (strain ATCC 43067 / DSM 2661 / JAL-1 / JCM 10045 / NBRC 100440) (Methanococcus jannaschii).